A 1560-amino-acid chain; its full sequence is MEEIENAHYQNLENFNDETSEDVNDTSDDINKNNDDNNKYDDNNVNVLDDKNKLENEEDNNNNDNMMIFSSILRYQRYKTKKGNIYFDFKNTNLSLNEKDMLVQSSNFYHLFDIKSLLCPHIYLNVSSHININISDYKNYLKRILNNDNVLDDKNENVKYSSCQEFIFEAVEQAEHIEVFTKVQIVKKLFLFLNQNVAEKMKNYIDNIPIINSNDYVLVQTNLKNDLLLGYVKGIKYNLFFEILNMKKCFHSFLNENIVIYEINEDKEGYFKTIDGKKYLKEQIVYEKKDLLKNLDFYSMYYCDYYFSSNSIIELEKKNNNNINCVNNNINSVNNNINSVDNNINNVDNNINSVNNNNNISDKITHKFEYNDYNDIHLFFSFNICIKSVKNNLFLHIIYNDNNLKNGDEYLNETFPHYEELNLYNKQFDINKMDKNLFKSNTFFINNLYYHLKCKLLCVFKFINMSDDDFMTDIHISQIKKRRYVNEQDSYMLYTFNIHTLSNEGMVYIFFCNLYISNMFKENNFEIRVHTYLHFQLNKQNSYKKLKLIKYSSKFLYSLCFKEKSDSKKKKKKNDHHERDSDNNNNDSNNNNYYNSNNNSNYCGSNNIIYGHDENFIFNSCDFNTLDQIKSGNYLIKDETINENFIFEVRNYKYTFILISSKCNIIIITLRKKKRKEEYNKKMSKYSSCSLNENVYMEGVEILNYCSSNNKNTNNIICNTIINKYNYEINNNIKNKNKSYILFEIVCFYENGEIQKYIYTCSLKNGNFEFFLNVKEDEKTKSINCKKCFFKPILFPFNEELLNKTKSSNDLVLYNIKLSHFKNLIYIYFQEKKIEGISLTINNECLIINYIKMVSKLLKKILQNLYNSDDIDIVYNFQHNTKNKCNYLSQNVNIPSDNTISNVIKKNEMDNNDIKYNLFTQREVKSSFFEFKYILFGFYDLFLMNQKNYTDLNEKKKEEYKKKNFINCFDSHSHYNFLNIIKEYINYDYIIDKCSYNISNDTQKKKKIKLNFYYFLLIIQYFKNTYTQEKKRSFFYMVYNELLQRDKYLKHFYYTYHEIDRKTNMHLNHNDNNIDTKEAKKNEETELILKNVNFYDNYELINIRKYDVILFCFLFHMYNFCLKQNGLSNDEFNSHITYFLINKKMKKYKKKYRYISKKKIDTNEKNDDNNNINVCDSKNYKGTKNFDDTTNNILNKQNESLDNLKKNMYLSKNNYDNQLSSYKNTKQNKTNINEKYNNNNIIMNYLTWKKCLYYIYKIKKYTRKIETHEGLYISSMLYINIYLCQIFFILLNILRINNTNIYTNIHFDIRKNNLDYFYLLILLNFYSLFYILISDQKYILHEEENDTYISKNIDNKEQMANDKNIISLLSFFNNIYEQNKEGMLKNDQNKNNHNTKTDILYMSSSGMNISINTPFLEKYLILIYNIIKDKINIVKEDNYIMEKLFFKINCMICNKVCVTNIYNNYYICENNHIFNKCMLTFGCIYKNHIILPTIYLLHDINDKLFPINNDHILSYNLQYELDYIYFCSFCYNFITTQNSFYKKFFLFNQCPFCNHELNIL.

Positions 1–46 (MEEIENAHYQNLENFNDETSEDVNDTSDDINKNNDDNNKYDDNNVN) are disordered. Acidic residues predominate over residues 15–28 (FNDETSEDVNDTSD). Residues 29–46 (DINKNNDDNNKYDDNNVN) show a composition bias toward basic and acidic residues. Coiled-coil stretches lie at residues 36-60 (DNNK…EEDN) and 317-359 (KKNN…NNNN). The disordered stretch occupies residues 568–594 (KKKKKKNDHHERDSDNNNNDSNNNNYY). Residues 583–594 (NNNNDSNNNNYY) show a composition bias toward low complexity. Positions 1188 to 1239 (DTTNNILNKQNESLDNLKKNMYLSKNNYDNQLSSYKNTKQNKTNINEKYNNN) form a coiled coil. The next 2 membrane-spanning stretches (helical) occupy residues 1271 to 1291 (LYIS…FILL) and 1314 to 1334 (LDYF…ILIS).

It is found in the membrane. This is an uncharacterized protein from Plasmodium falciparum (isolate 3D7).